We begin with the raw amino-acid sequence, 254 residues long: Triosephosphate isomerase, cytosolic (254 aa).

Substrate is bound by residues Asn-10 and Lys-12. The active-site Electrophile is the His-96. Catalysis depends on Glu-166, which acts as the Proton acceptor.

It belongs to the triosephosphate isomerase family. As to quaternary structure, homodimer.

The protein localises to the cytoplasm. The catalysed reaction is D-glyceraldehyde 3-phosphate = dihydroxyacetone phosphate. The protein operates within carbohydrate biosynthesis; gluconeogenesis. It functions in the pathway carbohydrate degradation; glycolysis; D-glyceraldehyde 3-phosphate from glycerone phosphate: step 1/1. This is Triosephosphate isomerase, cytosolic (TPIP1) from Petunia hybrida (Petunia).